Reading from the N-terminus, the 387-residue chain is Galactokinase (387 aa).

33-36 (EHTD) contacts substrate. Residues serine 67 and 124–130 (GAGLSSS) each bind ATP. Mg(2+)-binding residues include serine 130 and glutamate 162. Aspartate 174 serves as the catalytic Proton acceptor. Residue tyrosine 224 participates in substrate binding.

Belongs to the GHMP kinase family. GalK subfamily.

The protein resides in the cytoplasm. The catalysed reaction is alpha-D-galactose + ATP = alpha-D-galactose 1-phosphate + ADP + H(+). The protein operates within carbohydrate metabolism; galactose metabolism. Functionally, catalyzes the transfer of the gamma-phosphate of ATP to D-galactose to form alpha-D-galactose-1-phosphate (Gal-1-P). This chain is Galactokinase, found in Lactiplantibacillus plantarum (strain ATCC BAA-793 / NCIMB 8826 / WCFS1) (Lactobacillus plantarum).